We begin with the raw amino-acid sequence, 128 residues long: Ribonuclease P protein component (128 aa).

Belongs to the RnpA family. Consists of a catalytic RNA component (M1 or rnpB) and a protein subunit.

It catalyses the reaction Endonucleolytic cleavage of RNA, removing 5'-extranucleotides from tRNA precursor.. In terms of biological role, RNaseP catalyzes the removal of the 5'-leader sequence from pre-tRNA to produce the mature 5'-terminus. It can also cleave other RNA substrates such as 4.5S RNA. The protein component plays an auxiliary but essential role in vivo by binding to the 5'-leader sequence and broadening the substrate specificity of the ribozyme. This Prochlorococcus marinus (strain NATL2A) protein is Ribonuclease P protein component.